Here is a 181-residue protein sequence, read N- to C-terminus: Large ribosomal subunit protein uL16 (181 aa).

The protein belongs to the universal ribosomal protein uL16 family. Part of the 50S ribosomal subunit.

In Pyrococcus furiosus (strain ATCC 43587 / DSM 3638 / JCM 8422 / Vc1), this protein is Large ribosomal subunit protein uL16.